The chain runs to 209 residues: Ribosomal RNA large subunit methyltransferase E (209 aa).

5 residues coordinate S-adenosyl-L-methionine: Gly-60, Trp-62, Asp-80, Asp-96, and Asp-121. The active-site Proton acceptor is Lys-161.

This sequence belongs to the class I-like SAM-binding methyltransferase superfamily. RNA methyltransferase RlmE family.

The protein resides in the cytoplasm. The enzyme catalyses uridine(2552) in 23S rRNA + S-adenosyl-L-methionine = 2'-O-methyluridine(2552) in 23S rRNA + S-adenosyl-L-homocysteine + H(+). In terms of biological role, specifically methylates the uridine in position 2552 of 23S rRNA at the 2'-O position of the ribose in the fully assembled 50S ribosomal subunit. This Pseudomonas fluorescens (strain Pf0-1) protein is Ribosomal RNA large subunit methyltransferase E.